Here is a 1684-residue protein sequence, read N- to C-terminus: Latrophilin Cirl (1684 aa).

The Extracellular segment spans residues 1–765; the sequence is MASNNYIQIM…LFTMFDGNMR (765 aa). The region spanning 21–110 is the SUEL-type lectin domain; the sequence is ACEGKKLTIE…KYLEAHYQCV (90 aa). N-linked (GlcNAc...) asparagine glycosylation is found at Asn-138, Asn-251, Asn-297, and Asn-336. Residues 181 to 300 form a disordered region; the sequence is PPATHATPPG…GPSVSSNGSA (120 aa). Polar residues-rich tracts occupy residues 250 to 260 and 278 to 300; these read SNATAPSNTRI and KSSP…NGSA. Positions 370-391 are disordered; the sequence is SFDEDDEEMAGTSTTTPMSTSS. Residues 381–391 show a composition bias toward low complexity; sequence TSTTTPMSTSS. Asn-396, Asn-653, Asn-701, and Asn-728 each carry an N-linked (GlcNAc...) asparagine glycan. One can recognise a GAIN-B domain in the interval 559–752; sequence RSVVQKVKNI…AILMDVVDEH (194 aa). Disulfide bonds link Cys-707–Cys-734 and Cys-722–Cys-736. The GPS stretch occupies residues 707 to 752; that stretch reads CVFWNYIDHAWSANGCSLESTNRTHSVCSCNHLTNFAILMDVVDEH. A helical membrane pass occupies residues 766–786; it reads IFIYISIAICVVFIVIALLTL. The Cytoplasmic portion of the chain corresponds to 787 to 799; the sequence is KLFNGVFVKSART. The helical transmembrane segment at 800–820 threads the bilayer; the sequence is SIYINIYICLLAIELLFLLGI. Topologically, residues 821–826 are extracellular; sequence EQTETS. The helical transmembrane segment at 827-847 threads the bilayer; sequence IFCGFITVFLHCAILSGTSWF. At 848-873 the chain is on the cytoplasmic side; that stretch reads CYEAFHSYSTLTSDELLLEVDQTPKV. Residues 874-894 form a helical membrane-spanning segment; that stretch reads NCYYLLSYGLSLSVVAISLVI. Residues 895–918 are Extracellular-facing; it reads NPSTYTQNDYCVLMEANAVFYATF. Residues 919–939 traverse the membrane as a helical segment; that stretch reads VAPVLIFFMAAIGYTFLSWII. At 940–966 the chain is on the cytoplasmic side; the sequence is MCRKSRTGLKTKEHTRLATVRFDIRCS. The chain crosses the membrane as a helical span at residues 967-987; the sequence is FVFFLLLSAVWCSAYFYLRGA. Residues 988-994 lie on the Extracellular side of the membrane; the sequence is KMDEDVT. Residues 995–1015 traverse the membrane as a helical segment; the sequence is GIYGYNFICFNTLLGLYIFVF. Residues 1016-1684 lie on the Cytoplasmic side of the membrane; the sequence is HCIQNEKIRR…VRCYLEPLAK (669 aa). The interval 1080–1100 is disordered; sequence PLGTNDDAHDEQQQQQHMSAT. 3 positions are modified to phosphoserine: Ser-1156, Ser-1247, and Ser-1254. Disordered regions lie at residues 1228-1255, 1270-1353, 1441-1520, and 1587-1669; these read KPNS…LHSR, KTKP…APPP, SRYG…LPPQ, and SMRG…SAML. Residues 1298–1314 show a composition bias toward low complexity; the sequence is QQQQQLRQQRQQQQQQL. 2 positions are modified to phosphoserine: Ser-1315 and Ser-1316. The segment covering 1328 to 1348 has biased composition (low complexity); that stretch reads LHLQHQQQQQQQRRAGGQQQL. Over residues 1455–1466 the composition is skewed to polar residues; the sequence is RNQQQQQHSLAQ. Composition is skewed to acidic residues over residues 1476-1489 and 1499-1512; these read DEDD…EETT and CDEE…DMED. The segment covering 1631–1654 has biased composition (low complexity); it reads QQLQKLSPQSTTSSSSHTSHSNPH.

Belongs to the G-protein coupled receptor 2 family. LN-TM7 subfamily. As to quaternary structure, forms a heterodimer, consisting of a large extracellular region non-covalently linked to a seven-transmembrane moiety. Proteolytically cleaved into 2 subunits, an extracellular subunit and a seven-transmembrane subunit.

It is found in the cell membrane. The chain is Latrophilin Cirl from Drosophila persimilis (Fruit fly).